The primary structure comprises 931 residues: Isoleucine--tRNA ligase (931 aa).

Positions 58–68 (PYANGHLHCGH) match the 'HIGH' region motif. Glu559 provides a ligand contact to L-isoleucyl-5'-AMP. Positions 600–604 (KLSKS) match the 'KMSKS' region motif. Lys603 is an ATP binding site. Residues Cys894, Cys897, Cys914, and Cys917 each coordinate Zn(2+).

It belongs to the class-I aminoacyl-tRNA synthetase family. IleS type 1 subfamily. As to quaternary structure, monomer. Zn(2+) is required as a cofactor.

Its subcellular location is the cytoplasm. The enzyme catalyses tRNA(Ile) + L-isoleucine + ATP = L-isoleucyl-tRNA(Ile) + AMP + diphosphate. Its function is as follows. Catalyzes the attachment of isoleucine to tRNA(Ile). As IleRS can inadvertently accommodate and process structurally similar amino acids such as valine, to avoid such errors it has two additional distinct tRNA(Ile)-dependent editing activities. One activity is designated as 'pretransfer' editing and involves the hydrolysis of activated Val-AMP. The other activity is designated 'posttransfer' editing and involves deacylation of mischarged Val-tRNA(Ile). The polypeptide is Isoleucine--tRNA ligase (Legionella pneumophila (strain Paris)).